The chain runs to 54 residues: Ovomucoid (54 aa).

One can recognise a Kazal-like domain in the interval 4–54 (VDCSDYPKPVCSPENMPVCGSDSKTYSNKCDFCNAVADSNGTLTLSHFGKC). Cystine bridges form between cysteine 6/cysteine 36, cysteine 14/cysteine 33, and cysteine 22/cysteine 54. Residue asparagine 43 is glycosylated (N-linked (GlcNAc...) asparagine).

Its subcellular location is the secreted. The sequence is that of Ovomucoid from Nycticorax nycticorax (Black-crowned night-heron).